The chain runs to 557 residues: Tryptophan 2-monooxygenase (557 aa).

Residues Ser49, Glu69, Arg71, Arg77, and Arg98 each coordinate FMN. Arg98 contacts substrate.

It belongs to the tryptophan 2-monooxygenase family. As to quaternary structure, monomer. The cofactor is FMN.

The catalysed reaction is L-tryptophan + O2 = indole-3-acetamide + CO2 + H2O. The protein operates within plant hormone metabolism; auxin biosynthesis. The chain is Tryptophan 2-monooxygenase (iaaM) from Pseudomonas savastanoi (Pseudomonas syringae pv. savastanoi).